Consider the following 382-residue polypeptide: Na(+)/H(+) antiporter NhaA (382 aa).

The next 11 helical transmembrane spans lie at 14–34 (AGGI…NSSL), 49–69 (MSVS…LIGL), 87–107 (IFPA…YVAF), 117–137 (GWAI…ALLG), 146–166 (VFLL…IAFF), 171–191 (LSVL…LLNA), 205–225 (FILW…GVVL), 252–272 (VAFA…LEGV), 285–305 (VALG…YLAV), 321–341 (IFAV…ISSL), and 356–376 (LGIL…LSIS).

Belongs to the NhaA Na(+)/H(+) (TC 2.A.33) antiporter family.

It is found in the cell inner membrane. It carries out the reaction Na(+)(in) + 2 H(+)(out) = Na(+)(out) + 2 H(+)(in). Functionally, na(+)/H(+) antiporter that extrudes sodium in exchange for external protons. The chain is Na(+)/H(+) antiporter NhaA from Aliivibrio fischeri (strain ATCC 700601 / ES114) (Vibrio fischeri).